The primary structure comprises 126 residues: Large ribosomal subunit protein bL19 (126 aa).

The protein belongs to the bacterial ribosomal protein bL19 family.

Its function is as follows. This protein is located at the 30S-50S ribosomal subunit interface and may play a role in the structure and function of the aminoacyl-tRNA binding site. In Nitrobacter winogradskyi (strain ATCC 25391 / DSM 10237 / CIP 104748 / NCIMB 11846 / Nb-255), this protein is Large ribosomal subunit protein bL19.